The chain runs to 1177 residues: DNA-directed RNA polymerase subunit beta (1177 aa).

Over residues 1147–1161 (DDTEIEMRDTEDDDD) the composition is skewed to acidic residues. The interval 1147-1177 (DDTEIEMRDTEDDDDHQSADKLNVEVETTKE) is disordered. A compositionally biased stretch (basic and acidic residues) spans 1162–1177 (HQSADKLNVEVETTKE).

The protein belongs to the RNA polymerase beta chain family. As to quaternary structure, the RNAP catalytic core consists of 2 alpha, 1 beta, 1 beta' and 1 omega subunit. When a sigma factor is associated with the core the holoenzyme is formed, which can initiate transcription.

It carries out the reaction RNA(n) + a ribonucleoside 5'-triphosphate = RNA(n+1) + diphosphate. Its function is as follows. DNA-dependent RNA polymerase catalyzes the transcription of DNA into RNA using the four ribonucleoside triphosphates as substrates. The polypeptide is DNA-directed RNA polymerase subunit beta (Bacillus thuringiensis (strain Al Hakam)).